The chain runs to 194 residues: Probable transcription factor At4g00130 (194 aa).

The protein belongs to the GeBP family.

In Arabidopsis thaliana (Mouse-ear cress), this protein is Probable transcription factor At4g00130.